Here is a 98-residue protein sequence, read N- to C-terminus: UPF0235 protein MJ0618 (98 aa).

Belongs to the UPF0235 family.

The sequence is that of UPF0235 protein MJ0618 from Methanocaldococcus jannaschii (strain ATCC 43067 / DSM 2661 / JAL-1 / JCM 10045 / NBRC 100440) (Methanococcus jannaschii).